The sequence spans 838 residues: DNA gyrase subunit A (838 aa).

An N-acetylthreonine modification is found at Thr-2. Residues 41 to 510 (LPEVRDGLKP…ADGDVSDEDL (470 aa)) form the Topo IIA-type catalytic domain. The active-site O-(5'-phospho-DNA)-tyrosine intermediate is the Tyr-129. Ca(2+) contacts are provided by Asp-504, Ser-506, Glu-508, and Asp-515. Residues 504 to 516 (DVSDEDLIAREDV) form the EF-hand domain. The C-terminal domain CTD stretch occupies residues 514-838 (EDVVVTITET…DANGADQTGN (325 aa)). Residues 537–543 (QKRGGKG) carry the GyrA-box motif. The GyrA-box-1 motif lies at 743 to 749 (QGRGGKG).

Belongs to the type II topoisomerase GyrA/ParC subunit family. In terms of assembly, heterotetramer, composed of two GyrA and two GyrB chains. In the heterotetramer, GyrA contains the active site tyrosine that forms a transient covalent intermediate with DNA, while GyrB binds cofactors and catalyzes ATP hydrolysis. Requires Ca(2+) as cofactor.

The protein localises to the cytoplasm. It catalyses the reaction ATP-dependent breakage, passage and rejoining of double-stranded DNA.. With respect to regulation, DNA supercoiling inhibited by (fluoro)quinoline antibiotics such as sparfloxacin and levofloxacin, which usually act on GyrA. DNA supercoiling inhibited by the coumarin antibiotic novobiocin which acts on GyrB. Quinolones lead to gyrase-mediated dsDNA cleavage while preventing reclosure. DNA supercoiling activity inhibited by aminopyrazinamide and pyrrolamide derivatives, probably via effects on the GyrB subunit. DNA relaxation inhibited by ATP and its analogs. DNA supercoiling, relaxation, decatenation and quinolone-promoted DNA cleavage are inhibited by MfpA (50% inhibition occurs at 2 uM), inhibition of gyrase activities is enhanced in a concentration-dependent manner by MfpA. A type II topoisomerase that negatively supercoils closed circular double-stranded (ds) DNA in an ATP-dependent manner to maintain chromosomes in an underwound state, while in the absence of ATP it relaxes supercoiled dsDNA. Also catalyzes the interconversion of other topological isomers of dsDNA rings, including catenanes. Gyrase from M.tuberculosis has higher decatenation than supercoiling activity compared to E.coli; as M.tuberculosis only has 1 type II topoisomerase, gyrase has to fulfill the decatenation function of topoisomerase IV as well. At comparable concentrations M.tuberculosis gyrase cannot introduce as many negative supercoils into DNA as the E.coli enzyme, and its ATPase activity is lower, perhaps because it does not couple DNA wrapping and ATP binding as well as E.coli. Functionally, negative supercoiling favors strand separation, and DNA replication, transcription, recombination and repair, all of which involve strand separation. Type II topoisomerases break and join 2 DNA strands simultaneously in an ATP-dependent manner. This is DNA gyrase subunit A from Mycobacterium tuberculosis (strain ATCC 25618 / H37Rv).